Consider the following 228-residue polypeptide: HTH-type transcriptional regulator TfdT (228 aa).

The HTH lysR-type domain maps to 1–58 (MEIRQLKYFVAVAEAGGFGTAAQRMHISQPPLTRQIQALERDIGAKLFERTARGVELT). Residues 18-37 (FGTAAQRMHISQPPLTRQIQ) constitute a DNA-binding region (H-T-H motif).

Belongs to the LysR transcriptional regulatory family.

Its subcellular location is the cytoplasm. Functionally, does not seem to be involved in the regulation of 3-chlorocatechol degradation. Does not activate the expression of its presumed target operon, tfdCDEF. The polypeptide is HTH-type transcriptional regulator TfdT (tfdT) (Cupriavidus pinatubonensis (strain JMP 134 / LMG 1197) (Cupriavidus necator (strain JMP 134))).